Reading from the N-terminus, the 273-residue chain is Undecaprenyl-diphosphatase (273 aa).

7 helical membrane-spanning segments follow: residues 6 to 26 (SLLI…LPVS), 45 to 65 (AKTF…VMFW), 90 to 110 (LTLI…LLFH), 116 to 136 (LFNP…LIAA), 190 to 210 (YAAS…ATAL), 222 to 242 (GDIP…LIAI), and 252 to 272 (ISFI…YVVF).

It belongs to the UppP family.

The protein resides in the cell inner membrane. It carries out the reaction di-trans,octa-cis-undecaprenyl diphosphate + H2O = di-trans,octa-cis-undecaprenyl phosphate + phosphate + H(+). In terms of biological role, catalyzes the dephosphorylation of undecaprenyl diphosphate (UPP). Confers resistance to bacitracin. The protein is Undecaprenyl-diphosphatase of Escherichia coli O7:K1 (strain IAI39 / ExPEC).